The following is a 95-amino-acid chain: Aspartyl/glutamyl-tRNA(Asn/Gln) amidotransferase subunit C (95 aa).

It belongs to the GatC family. As to quaternary structure, heterotrimer of A, B and C subunits.

It catalyses the reaction L-glutamyl-tRNA(Gln) + L-glutamine + ATP + H2O = L-glutaminyl-tRNA(Gln) + L-glutamate + ADP + phosphate + H(+). The enzyme catalyses L-aspartyl-tRNA(Asn) + L-glutamine + ATP + H2O = L-asparaginyl-tRNA(Asn) + L-glutamate + ADP + phosphate + 2 H(+). In terms of biological role, allows the formation of correctly charged Asn-tRNA(Asn) or Gln-tRNA(Gln) through the transamidation of misacylated Asp-tRNA(Asn) or Glu-tRNA(Gln) in organisms which lack either or both of asparaginyl-tRNA or glutaminyl-tRNA synthetases. The reaction takes place in the presence of glutamine and ATP through an activated phospho-Asp-tRNA(Asn) or phospho-Glu-tRNA(Gln). The sequence is that of Aspartyl/glutamyl-tRNA(Asn/Gln) amidotransferase subunit C from Bradyrhizobium sp. (strain ORS 278).